The primary structure comprises 209 residues: MAKVYVFDHPLIQHKLTYIRDVHTGTKEFRELVDEVATLMAFEITRDLPLEEVDVETPVQVAKSNVISGKKLGVVPILRAGLGMVDGILKLIPAAKVGHVGLYRDPKTLKPVEYYVKLPSDVEEREFIVVDPMLATGGSAVEALNSLKKRGAKNIRFMCLIAAPEGVEEMQKHHPDVDIYIAALDEKLNEKGYIIPGLGDAGDRMYGTK.

Residues R79, R104, and D131–S139 contribute to the 5-phospho-alpha-D-ribose 1-diphosphate site. Uracil contacts are provided by residues I194 and G199–A201. D200 is a 5-phospho-alpha-D-ribose 1-diphosphate binding site.

The protein belongs to the UPRTase family. The cofactor is Mg(2+).

The catalysed reaction is UMP + diphosphate = 5-phospho-alpha-D-ribose 1-diphosphate + uracil. It functions in the pathway pyrimidine metabolism; UMP biosynthesis via salvage pathway; UMP from uracil: step 1/1. With respect to regulation, allosterically activated by GTP. Its function is as follows. Catalyzes the conversion of uracil and 5-phospho-alpha-D-ribose 1-diphosphate (PRPP) to UMP and diphosphate. This is Uracil phosphoribosyltransferase from Bacillus pumilus (strain SAFR-032).